Here is a 333-residue protein sequence, read N- to C-terminus: Antimicrobial peptides (333 aa).

The signal sequence occupies residues 1-23 (MVQKGVVFGVLLILFICSTLTSA). Residues 23 to 52 (ADSKPNPTKEEEPAKKPDEVSVKSGGPEVS) are disordered. Residues 24 to 54 (DSKPNPTKEEEPAKKPDEVSVKSGGPEVSED) constitute a propeptide, acidic peptide 1. Residues 29 to 43 (PTKEEEPAKKPDEVS) are compositionally biased toward basic and acidic residues. Position 55 is a pyrrolidone carboxylic acid (Gln-55). Cystine bridges form between Cys-60/Cys-70 and Cys-61/Cys-74. A propeptide spans 75–102 (ANAEEAAAAIPEASEELAQEEAPVYSED) (acidic peptide 2). Pyrrolidone carboxylic acid is present on Gln-103. Cystine bridges form between Cys-108–Cys-118 and Cys-109–Cys-122. Residues 123–148 (QNAEEAAAAIPEATEKAQEAPVYSED) constitute a propeptide, acidic peptide 3. Gln-149 carries the post-translational modification Pyrrolidone carboxylic acid. Intrachain disulfides connect Cys-154/Cys-164 and Cys-155/Cys-168. The propeptide at 169–196 (QNAEEAAAAVAIPEASEKAQEGPVYSED) is acidic peptide 4. Position 197 is a pyrrolidone carboxylic acid (Gln-197). 2 disulfide bridges follow: Cys-202–Cys-212 and Cys-203–Cys-216. Residues 217 to 232 (SNAADEVATPEDVEPG) constitute a propeptide, acidic peptide 5. Gln-233 is subject to Pyrrolidone carboxylic acid. Disulfide bonds link Cys-238–Cys-248 and Cys-239–Cys-252. Residues 253–278 (HNAAEEATLKAFEEEAAREQPVYSED) constitute a propeptide, acidic peptide 6. Gln-279 carries the pyrrolidone carboxylic acid modification. 2 cysteine pairs are disulfide-bonded: Cys-284-Cys-294 and Cys-285-Cys-298. Positions 299–333 (QSAEEAAAFQAGEVTASLMLIMFKACPCMGPVPSV) are cleaved as a propeptide — acidic peptide 7.

The N-terminal of all peptides are blocked. Post-translationally, the 4 cysteine residues of all peptides are involved in intrachain disulfide bonds.

Its subcellular location is the secreted. Its function is as follows. Plays a role in the defense of the germinating seed against microorganisms, by inhibiting the growth of a range of filamentous fungi and bacteria, especially Gram-positive bacteria. Not cytotoxic for cultured human cells and are the smallest known plant-derived antimicrobial peptides. Peptide IB-AMP4 has a higher antifungal activity than IB-AMP1. In Impatiens balsamina (Balsam), this protein is Antimicrobial peptides (AMP).